The primary structure comprises 92 residues: Putative septation protein SpoVG (92 aa).

This sequence belongs to the SpoVG family.

Functionally, could be involved in septation. In Clostridioides difficile (strain 630) (Peptoclostridium difficile), this protein is Putative septation protein SpoVG.